A 309-amino-acid polypeptide reads, in one-letter code: DSC E3 ubiquitin ligase complex subunit C (309 aa).

Asn61 carries an N-linked (GlcNAc...) asparagine glycan. Disordered stretches follow at residues 88–110 and 148–177; these read LPPSPSRTPVVQEDATTVKGKGK and EQADEGYTGRKKQQQPPPSTTSAPRGFDRL. A run of 2 helical transmembrane segments spans residues 257 to 277 and 289 to 309; these read DDMLWGAVMGFFWPVGCAMWL and GLAVFVGVVINVAFGAMRIMN.

Belongs to the dsc3 family. Component of the DSC E3 ubiquitin ligase complex composed of dscA, dscB, dscC and dscD.

The protein resides in the endoplasmic reticulum membrane. Its pathway is protein modification; protein ubiquitination. Functionally, component of the DSC E3 ubiquitin ligase complex which is required for the srbA transcriptional activator proteolytic cleavage to release the soluble transcription factor from the membrane in low oxygen or sterol conditions. Required for growth during hypoxia and triazole drug susceptibility, as well as for virulence in a murine model of invasive pulmonary aspergillosis (IPA). The sequence is that of DSC E3 ubiquitin ligase complex subunit C from Aspergillus fumigatus (strain CBS 144.89 / FGSC A1163 / CEA10) (Neosartorya fumigata).